The chain runs to 352 residues: MNGTEGPFFYIPMVNTTGIVRSPYEYPQYYLVNPAAYACLGAYMFFLILVGFPVNFLTLYVTLEHKKLRTPLNYILLNLAVADLFMVFGGFTTTMYTSMHGYFVLGRLGCNIEGFFATLGGEIALWSLVVLAIERWVVVCKPISNFRFGENHAIMGVAFTWFMASACAVPPLVGWSRYIPEGMQCSCGVDYYTRAEGFNNESFVIYMFIVHFCIPLAVVGFCYGRLLCAVKEAAAAQQESETTQRAEREVSRMVVIMVIGFLVCWLPYASVAWYIFTHQGSEFGPPFMTVPAFFAKSSSIYNPMIYICMNKQFRHCMITTLCCGKNPFEEEEGASTTKTEASSVSSSSVSPA.

The Extracellular segment spans residues 1-36 (MNGTEGPFFYIPMVNTTGIVRSPYEYPQYYLVNPAA). 2 N-linked (GlcNAc...) asparagine glycosylation sites follow: Asn2 and Asn15. Residues 37-61 (YACLGAYMFFLILVGFPVNFLTLYV) traverse the membrane as a helical segment. The Cytoplasmic portion of the chain corresponds to 62–73 (TLEHKKLRTPLN). The chain crosses the membrane as a helical span at residues 74–96 (YILLNLAVADLFMVFGGFTTTMY). Residues 97-110 (TSMHGYFVLGRLGC) are Extracellular-facing. A disulfide bond links Cys110 and Cys187. Residues 111 to 133 (NIEGFFATLGGEIALWSLVVLAI) form a helical membrane-spanning segment. A 'Ionic lock' involved in activated form stabilization motif is present at residues 134 to 136 (ERW). Topologically, residues 134–152 (ERWVVVCKPISNFRFGENH) are cytoplasmic. Residues 153 to 173 (AIMGVAFTWFMASACAVPPLV) form a helical membrane-spanning segment. The Extracellular portion of the chain corresponds to 174–202 (GWSRYIPEGMQCSCGVDYYTRAEGFNNES). The N-linked (GlcNAc...) asparagine glycan is linked to Asn200. A helical membrane pass occupies residues 203 to 224 (FVIYMFIVHFCIPLAVVGFCYG). The Cytoplasmic segment spans residues 225-252 (RLLCAVKEAAAAQQESETTQRAEREVSR). The chain crosses the membrane as a helical span at residues 253 to 274 (MVVIMVIGFLVCWLPYASVAWY). At 275 to 286 (IFTHQGSEFGPP) the chain is on the extracellular side. The helical transmembrane segment at 287–308 (FMTVPAFFAKSSSIYNPMIYIC) threads the bilayer. Lys296 carries the post-translational modification N6-(retinylidene)lysine. Over 309 to 352 (MNKQFRHCMITTLCCGKNPFEEEEGASTTKTEASSVSSSSVSPA) the chain is Cytoplasmic. Residues Cys322 and Cys323 are each lipidated (S-palmitoyl cysteine). The interval 331 to 352 (EEGASTTKTEASSVSSSSVSPA) is disordered. Residues 342–352 (SSVSSSSVSPA) show a composition bias toward low complexity.

The protein belongs to the G-protein coupled receptor 1 family. Opsin subfamily. Post-translationally, phosphorylated on some or all of the serine and threonine residues present in the C-terminal region. Contains one covalently linked retinal chromophore.

The protein resides in the membrane. It localises to the cell projection. The protein localises to the cilium. It is found in the photoreceptor outer segment. Photoreceptor required for image-forming vision at low light intensity. While most salt water fish species use retinal as chromophore, most freshwater fish use 3-dehydroretinal, or a mixture of retinal and 3-dehydroretinal. Light-induced isomerization of 11-cis to all-trans retinal triggers a conformational change that activates signaling via G-proteins. Subsequent receptor phosphorylation mediates displacement of the bound G-protein alpha subunit by arrestin and terminates signaling. The chain is Rhodopsin (rho) from Zosterisessor ophiocephalus (Grass goby).